The primary structure comprises 1579 residues: Pentafunctional AROM polypeptide (1579 aa).

Residues 1 to 383 (MLVKVPILGR…YGKSAHVVSD (383 aa)) are 3-dehydroquinate synthase. NAD(+) is bound by residues 40-42 (DSN), 75-78 (EANK), 106-108 (GGI), and D111. R122 lines the 7-phospho-2-dehydro-3-deoxy-D-arabino-heptonate pocket. 131–132 (TS) serves as a coordination point for NAD(+). The 7-phospho-2-dehydro-3-deoxy-D-arabino-heptonate site is built by D138 and K144. K153 is a binding site for NAD(+). Residue N154 coordinates 7-phospho-2-dehydro-3-deoxy-D-arabino-heptonate. Residues 171 to 174 (WLQS) and N182 contribute to the NAD(+) site. E186 is a binding site for Zn(2+). 7-phospho-2-dehydro-3-deoxy-D-arabino-heptonate contacts are provided by residues 186–189 (EVIK) and K249. E259 serves as the catalytic Proton acceptor; for 3-dehydroquinate synthase activity. 7-phospho-2-dehydro-3-deoxy-D-arabino-heptonate is bound by residues 263–267 (RNLLN) and H270. Residue H270 participates in Zn(2+) binding. The Proton acceptor; for 3-dehydroquinate synthase activity role is filled by H274. 7-phospho-2-dehydro-3-deoxy-D-arabino-heptonate contacts are provided by H286 and K355. H286 is a Zn(2+) binding site. The EPSP synthase stretch occupies residues 396 to 862 (VYPFNNIPRD…WDVLHTELGA (467 aa)). C844 acts as the For EPSP synthase activity in catalysis. Residues 881–1071 (SVVIIGMRAA…IPTRRSAFVC (191 aa)) are shikimate kinase. 886 to 893 (GMRAAGKT) serves as a coordination point for ATP. The tract at residues 1072–1284 (LTFENLTEYT…AAPGQLTVAE (213 aa)) is 3-dehydroquinase. H1189 acts as the Proton acceptor; for 3-dehydroquinate dehydratase activity in catalysis. K1218 (schiff-base intermediate with substrate; for 3-dehydroquinate dehydratase activity) is an active-site residue. The tract at residues 1297 to 1579 (KKDFFVVGSP…KAIYDAVTEI (283 aa)) is shikimate dehydrogenase.

It in the N-terminal section; belongs to the sugar phosphate cyclases superfamily. Dehydroquinate synthase family. In the 2nd section; belongs to the EPSP synthase family. The protein in the 3rd section; belongs to the shikimate kinase family. This sequence in the 4th section; belongs to the type-I 3-dehydroquinase family. It in the C-terminal section; belongs to the shikimate dehydrogenase family. Homodimer. Zn(2+) is required as a cofactor.

It localises to the cytoplasm. It carries out the reaction 7-phospho-2-dehydro-3-deoxy-D-arabino-heptonate = 3-dehydroquinate + phosphate. It catalyses the reaction 3-dehydroquinate = 3-dehydroshikimate + H2O. The catalysed reaction is shikimate + NADP(+) = 3-dehydroshikimate + NADPH + H(+). The enzyme catalyses shikimate + ATP = 3-phosphoshikimate + ADP + H(+). It carries out the reaction 3-phosphoshikimate + phosphoenolpyruvate = 5-O-(1-carboxyvinyl)-3-phosphoshikimate + phosphate. The protein operates within metabolic intermediate biosynthesis; chorismate biosynthesis; chorismate from D-erythrose 4-phosphate and phosphoenolpyruvate: step 2/7. It participates in metabolic intermediate biosynthesis; chorismate biosynthesis; chorismate from D-erythrose 4-phosphate and phosphoenolpyruvate: step 3/7. Its pathway is metabolic intermediate biosynthesis; chorismate biosynthesis; chorismate from D-erythrose 4-phosphate and phosphoenolpyruvate: step 4/7. It functions in the pathway metabolic intermediate biosynthesis; chorismate biosynthesis; chorismate from D-erythrose 4-phosphate and phosphoenolpyruvate: step 5/7. The protein operates within metabolic intermediate biosynthesis; chorismate biosynthesis; chorismate from D-erythrose 4-phosphate and phosphoenolpyruvate: step 6/7. Functionally, the AROM polypeptide catalyzes 5 consecutive enzymatic reactions in prechorismate polyaromatic amino acid biosynthesis. This chain is Pentafunctional AROM polypeptide, found in Candida glabrata (strain ATCC 2001 / BCRC 20586 / JCM 3761 / NBRC 0622 / NRRL Y-65 / CBS 138) (Yeast).